A 554-amino-acid chain; its full sequence is Bifunctional epoxide hydrolase 2 (554 aa).

The tract at residues 1–224 (MALRVAAFDL…KVTGTQFPEA (224 aa)) is phosphatase. The Mg(2+) site is built by aspartate 9 and aspartate 11. Lysine 55 carries the post-translational modification N6-succinyllysine. 123–124 (TN) is a binding site for phosphate. At lysine 176 the chain carries N6-acetyllysine; alternate. Lysine 176 carries the N6-succinyllysine; alternate modification. Aspartate 185 provides a ligand contact to Mg(2+). Lysine 191 and lysine 215 each carry N6-acetyllysine. Residues 233–554 (NDVSHGYVTV…VQNPSVTSKI (322 aa)) form an epoxide hydrolase region. One can recognise an AB hydrolase-1 domain in the interval 257 to 530 (PALCLCHGFP…CGHWTQIEKP (274 aa)). Aspartate 333 functions as the Nucleophile in the catalytic mechanism. At serine 368 the chain carries Phosphoserine. Lysine 371 bears the N6-succinyllysine mark. Residue tyrosine 381 coordinates substrate. An N6-succinyllysine mark is found at lysine 420 and lysine 454. The active-site Proton donor is tyrosine 465. Lysine 504 bears the N6-succinyllysine mark. Position 508 is an N6-acetyllysine; alternate (lysine 508). An N6-succinyllysine; alternate modification is found at lysine 508. Cysteine 521 is lipidated: S-(15-deoxy-Delta12,14-prostaglandin J2-9-yl)cysteine. Catalysis depends on histidine 523, which acts as the Proton acceptor. Residues 552–554 (SKI) carry the Microbody targeting signal motif. Lysine 553 is subject to N6-succinyllysine.

The protein belongs to the AB hydrolase superfamily. Epoxide hydrolase family. Homodimer. It depends on Mg(2+) as a cofactor. In terms of processing, the N-terminus is blocked. The covalent modification of cysteine by 15-deoxy-Delta12,14-prostaglandin-J2 is autocatalytic and reversible. It may occur as an alternative to other cysteine modifications, such as S-nitrosylation and S-palmitoylation. Detected in liver, intestine, ovary and kidney. Detected at low levels in heart and muscle.

It localises to the cytoplasm. The protein resides in the peroxisome. It carries out the reaction an epoxide + H2O = an ethanediol. The enzyme catalyses (9S,10S)-10-hydroxy-9-(phosphooxy)octadecanoate + H2O = (9S,10S)-9,10-dihydroxyoctadecanoate + phosphate. The catalysed reaction is 8-hydroxy-(11S,12S)-epoxy-(5Z,9E,14Z)-eicosatrienoate + H2O = (8,11R,12S)-trihydroxy-(5Z,9E,14Z)-eicosatrienoate. It catalyses the reaction 10-hydroxy-(11S,12S)-epoxy- (5Z,8Z,14Z)-eicosatrienoate + H2O = (10,11S,12R)-trihydroxy-(5Z,8Z,14Z)-eicosatrienoate. It carries out the reaction (8S,9R)-epoxy-(5Z,11Z,14Z)-eicosatrienoate + H2O = (8S,9S)-dihydroxy-(5Z,11Z,14Z)-eicosatrienoate. The enzyme catalyses (11S,12R)-epoxy-(5Z,8Z,14Z)-eicosatrienoate + H2O = (11R,12R)-dihydroxy-(5Z,8Z,14Z)-eicosatrienoate. The catalysed reaction is (11S,12R)-epoxy-(5Z,8Z,14Z)-eicosatrienoate + H2O = (11S,12S)-dihydroxy-(5Z,8Z,14Z)-eicosatrienoate. It catalyses the reaction (14S,15R)-epoxy-(5Z,8Z,11Z)-eicosatrienoate + H2O = (14R,15R)-dihydroxy-(5Z,8Z,11Z)-eicosatrienoate. It carries out the reaction (14S,15R)-epoxy-(5Z,8Z,11Z)-eicosatrienoate + H2O = (14S,15S)-dihydroxy-(5Z,8Z,11Z)-eicosatrienoate. The enzyme catalyses (11R,12S)-epoxy-(5Z,8Z,14Z)-eicosatrienoate + H2O = (11S,12S)-dihydroxy-(5Z,8Z,14Z)-eicosatrienoate. The catalysed reaction is (11R,12S)-epoxy-(5Z,8Z,14Z)-eicosatrienoate + H2O = (11R,12R)-dihydroxy-(5Z,8Z,14Z)-eicosatrienoate. It catalyses the reaction (8S,9R)-epoxy-(5Z,11Z,14Z)-eicosatrienoate + H2O = (8R,9R)-dihydroxy-(5Z,11Z,14Z)-eicosatrienoate. It carries out the reaction 12-phosphooxy-(9Z)-octadecenoate + H2O = 12-hydroxy-(9Z)-octadecenoate + phosphate. The enzyme catalyses 12-phosphooxy-(9E)-octadecenoate + H2O = 12-hydroxy-(9E)-octadecenoate + phosphate. The catalysed reaction is 12-(phosphooxy)octadecanoate + H2O = 12-hydroxyoctadecanoate + phosphate. It catalyses the reaction 8,9-epoxy-(5Z,11Z,14Z)-eicosatrienoate + H2O = 8,9-dihydroxy-(5Z,11Z,14Z)-eicosatrienoate. It carries out the reaction 11,12-epoxy-(5Z,8Z,14Z)-eicosatrienoate + H2O = 11,12-dihydroxy-(5Z,8Z,14Z)-eicosatrienoate. The enzyme catalyses 14,15-epoxy-(5Z,8Z,11Z)-eicosatrienoate + H2O = 14,15-dihydroxy-(5Z,8Z,11Z)-eicosatrienoate. The catalysed reaction is 9,10-epoxy-(12Z)-octadecenoate + H2O = 9,10-dihydroxy-(12Z)-octadecenoate. It catalyses the reaction 1-tetradecanoyl-sn-glycerol 3-phosphate + H2O = 1-tetradecanoyl-sn-glycerol + phosphate. It carries out the reaction 1-octadecanoyl-sn-glycero-3-phosphate + H2O = 1-octadecanoyl-sn-glycerol + phosphate. The enzyme catalyses 1-(5Z,8Z,11Z,14Z-eicosatetraenoyl)-sn-glycero-3-phosphate + H2O = 1-(5Z,8Z,11Z,14Z-eicosatetraenoyl)-sn-glycerol + phosphate. The catalysed reaction is 1-hexadecanoyl-sn-glycero-3-phosphate + H2O = 1-hexadecanoyl-sn-glycerol + phosphate. It catalyses the reaction 1-(9Z-octadecenoyl)-sn-glycero-3-phosphate + H2O = 1-(9Z-octadecenoyl)-sn-glycerol + phosphate. It carries out the reaction (14R,15S)-epoxy-(5Z,8Z,11Z)-eicosatrienoate + H2O = (14R,15R)-dihydroxy-(5Z,8Z,11Z)-eicosatrienoate. Inhibited by 1-(1-acetylpiperidin-4-yl)-3-(4-(trifl uoromethoxy)phenyl)urea (TPAU), 1-cyclohexyl-3-dodecylurea (CDU), 12-(3-adamantan-1-yl-ureido)-dodecanoic acid (AUDA), 1-((3S, 5S, 7S)-adamantan-1-yl)-3-(5-(2-(2-ethoxyethoxy) ethoxy)pentyl)urea (AEPU), N-adamantyl-N[']-cyclohexyl urea (ACU), 4-(((1S, 4S)-4-(3-((3S, 5S, 7S)-adamantan-1-yl) ureido)cyclohexyl)oxy)benzoic acid (c-AUCB), 4-(((1R, 4R)-4-(3-((3S, 5S, 7S)-adamantan-1-yl)ureido)cyclohexyl)oxy)benzoic acid (t-AUCB), 4-(((1R, 4R)-4-(3-(4(trifluoromethoxy)phenyl)ureido)cyclohexyl)oxy)benzoic acid (t-TAUCB) and to a lesser extent by 8-(3-((3S, 5S, 7S)-adamantan-1-yl)ureido) octanoic acid (AUOA). Phosphatase activity is inhibited by dodecyl-phosphate, phospholipids such as phospho-lysophosphatidic acids and fatty acids such as palmitic acid and lauric acid. Bifunctional enzyme. The C-terminal domain has epoxide hydrolase activity and acts on epoxides (alkene oxides, oxiranes) and arene oxides. Plays a role in xenobiotic metabolism by degrading potentially toxic epoxides. Also determines steady-state levels of physiological mediators. Its function is as follows. Bifunctional enzyme. The N-terminal domain has lipid phosphatase activity, with the highest activity towards threo-9,10-phosphonooxy-hydroxy-octadecanoic acid, followed by erythro-9,10-phosphonooxy-hydroxy-octadecanoic acid, 12-phosphonooxy-octadec-9Z-enoic acid and 12-phosphonooxy-octadec-9E-enoic acid. Has phosphatase activity toward lyso-glycerophospholipids with also some lower activity toward lysolipids of sphingolipid and isoprenoid phosphates. The protein is Bifunctional epoxide hydrolase 2 of Mus musculus (Mouse).